A 546-amino-acid polypeptide reads, in one-letter code: Glutamate--tRNA ligase (546 aa).

The short motif at 42-52 (PSPTGFIHLGN) is the 'HIGH' region element. The 'KMSKS' region motif lies at 293–297 (KLSKR). K296 provides a ligand contact to ATP.

The protein belongs to the class-I aminoacyl-tRNA synthetase family. Glutamate--tRNA ligase type 1 subfamily. Monomer.

Its subcellular location is the cytoplasm. The catalysed reaction is tRNA(Glu) + L-glutamate + ATP = L-glutamyl-tRNA(Glu) + AMP + diphosphate. In terms of biological role, catalyzes the attachment of glutamate to tRNA(Glu) in a two-step reaction: glutamate is first activated by ATP to form Glu-AMP and then transferred to the acceptor end of tRNA(Glu). In Acetivibrio thermocellus (strain ATCC 27405 / DSM 1237 / JCM 9322 / NBRC 103400 / NCIMB 10682 / NRRL B-4536 / VPI 7372) (Clostridium thermocellum), this protein is Glutamate--tRNA ligase.